The chain runs to 147 residues: Hemoglobin subunit epsilon-4 (147 aa).

Residues His3–His147 form the Globin domain. Residues His64 and His93 each contribute to the heme b site.

It belongs to the globin family. As to expression, red blood cells.

In terms of biological role, hemoglobin epsilon chain is a beta-type chain found in early embryos. This is Hemoglobin subunit epsilon-4 (HBE4) from Bos taurus (Bovine).